A 152-amino-acid polypeptide reads, in one-letter code: MIALIQRVTRADVRVGGRTTGEIGAGLLALVCAERGDTEAAADKLLAKLLGYRVFSDAAGKMNLPVSNIDGEGRAGGLLLVSQFTLAADTNSGLRPSFTPAAPPDEGARLFDYFVAAARARHPVVETGEFGADMQVSLVNDGPVTFWLQVRP.

A Gly-cisPro motif, important for rejection of L-amino acids motif is present at residues 142-143; that stretch reads GP.

It belongs to the DTD family. As to quaternary structure, homodimer.

It localises to the cytoplasm. It carries out the reaction glycyl-tRNA(Ala) + H2O = tRNA(Ala) + glycine + H(+). It catalyses the reaction a D-aminoacyl-tRNA + H2O = a tRNA + a D-alpha-amino acid + H(+). In terms of biological role, an aminoacyl-tRNA editing enzyme that deacylates mischarged D-aminoacyl-tRNAs. Also deacylates mischarged glycyl-tRNA(Ala), protecting cells against glycine mischarging by AlaRS. Acts via tRNA-based rather than protein-based catalysis; rejects L-amino acids rather than detecting D-amino acids in the active site. By recycling D-aminoacyl-tRNA to D-amino acids and free tRNA molecules, this enzyme counteracts the toxicity associated with the formation of D-aminoacyl-tRNA entities in vivo and helps enforce protein L-homochirality. This is D-aminoacyl-tRNA deacylase from Burkholderia cenocepacia (strain ATCC BAA-245 / DSM 16553 / LMG 16656 / NCTC 13227 / J2315 / CF5610) (Burkholderia cepacia (strain J2315)).